Reading from the N-terminus, the 599-residue chain is Aspartate--tRNA(Asp/Asn) ligase (599 aa).

Position 174 (Glu-174) interacts with L-aspartate. Positions 198–201 (QLFK) are aspartate. L-aspartate is bound at residue Arg-220. Residues 220-222 (RDE) and Gln-229 contribute to the ATP site. L-aspartate is bound at residue His-457. Glu-491 is an ATP binding site. Arg-498 provides a ligand contact to L-aspartate. Residue 543-546 (GLDR) participates in ATP binding.

The protein belongs to the class-II aminoacyl-tRNA synthetase family. Type 1 subfamily. Homodimer.

The protein localises to the cytoplasm. It carries out the reaction tRNA(Asx) + L-aspartate + ATP = L-aspartyl-tRNA(Asx) + AMP + diphosphate. Aspartyl-tRNA synthetase with relaxed tRNA specificity since it is able to aspartylate not only its cognate tRNA(Asp) but also tRNA(Asn). Reaction proceeds in two steps: L-aspartate is first activated by ATP to form Asp-AMP and then transferred to the acceptor end of tRNA(Asp/Asn). The chain is Aspartate--tRNA(Asp/Asn) ligase from Paraburkholderia xenovorans (strain LB400).